The following is a 280-amino-acid chain: DNA repair protein XRCC2 (280 aa).

A Phosphoserine modification is found at Ser-10.

The protein belongs to the RecA family. RAD51 subfamily. As to quaternary structure, interacts with RAD51D. Part of the BCDX2 complex consisting of RAD51B, RAD51C, RAD51D and XRCC2; the complex has a ring-like structure arranged into a flat disk around a central channel. In the absence of DNA, the BCDX2 subcomplex XRCC2:RAD51D formed a multimeric ring structure; in the presence of single-stranded DNA it formed a filamentous structure with the ssDNA.

The protein resides in the nucleus. Its subcellular location is the cytoplasm. The protein localises to the cytoskeleton. It is found in the microtubule organizing center. It localises to the centrosome. In terms of biological role, involved in the homologous recombination repair (HRR) pathway of double-stranded DNA, thought to repair chromosomal fragmentation, translocations and deletions. Part of the RAD51 paralog protein complex BCDX2 which acts in the BRCA1-BRCA2-dependent HR pathway. Upon DNA damage, BCDX2 acts downstream of BRCA2 recruitment and upstream of RAD51 recruitment. BCDX2 binds predominantly to the intersection of the four duplex arms of the Holliday junction and to junction of replication forks. The BCDX2 complex was originally reported to bind single-stranded DNA, single-stranded gaps in duplex DNA and specifically to nicks in duplex DNA. The polypeptide is DNA repair protein XRCC2 (XRCC2) (Homo sapiens (Human)).